A 220-amino-acid polypeptide reads, in one-letter code: Small ribosomal subunit protein uS2 (220 aa).

Positions 201 to 220 are disordered; that stretch reads LPPDGDLPEPPSEFEVKFKR.

It belongs to the universal ribosomal protein uS2 family.

The sequence is that of Small ribosomal subunit protein uS2 from Staphylothermus marinus (strain ATCC 43588 / DSM 3639 / JCM 9404 / F1).